A 252-amino-acid polypeptide reads, in one-letter code: Chitooligosaccharide deacetylase (252 aa).

Positions 61 and 125 each coordinate Mg(2+).

Belongs to the YdjC deacetylase family. ChbG subfamily. Homodimer. Mg(2+) serves as cofactor.

It localises to the cytoplasm. It carries out the reaction N,N'-diacetylchitobiose + H2O = N-acetyl-beta-D-glucosaminyl-(1-&gt;4)-D-glucosamine + acetate. The enzyme catalyses diacetylchitobiose-6'-phosphate + H2O = N'-monoacetylchitobiose-6'-phosphate + acetate. It functions in the pathway glycan degradation; chitin degradation. In terms of biological role, involved in the degradation of chitin. ChbG is essential for growth on the acetylated chitooligosaccharides chitobiose and chitotriose but is dispensable for growth on cellobiose and chitosan dimer, the deacetylated form of chitobiose. Deacetylation of chitobiose-6-P and chitotriose-6-P is necessary for both the activation of the chb promoter by the regulatory protein ChbR and the hydrolysis of phosphorylated beta-glucosides by the phospho-beta-glucosidase ChbF. Catalyzes the removal of only one acetyl group from chitobiose-6-P to yield monoacetylchitobiose-6-P, the inducer of ChbR and the substrate of ChbF. This is Chitooligosaccharide deacetylase from Salmonella enteritidis PT4 (strain P125109).